Reading from the N-terminus, the 201-residue chain is Holliday junction branch migration complex subunit RuvA (201 aa).

The domain I stretch occupies residues 1-63 (MIGCLIGEVF…EDAQQLYGFI (63 aa)). Positions 64-142 (DAQEKLIFRT…ALSVQATTGS (79 aa)) are domain II. The interval 143–152 (TVTSAQIQFS) is flexible linker. Residues 152–201 (SSNSPIAEAEAALQSLGYKPIEAQKAIAAVKADYTEAADLIRAALKSMMK) are domain III.

The protein belongs to the RuvA family. Homotetramer. Forms an RuvA(8)-RuvB(12)-Holliday junction (HJ) complex. HJ DNA is sandwiched between 2 RuvA tetramers; dsDNA enters through RuvA and exits via RuvB. An RuvB hexamer assembles on each DNA strand where it exits the tetramer. Each RuvB hexamer is contacted by two RuvA subunits (via domain III) on 2 adjacent RuvB subunits; this complex drives branch migration. In the full resolvosome a probable DNA-RuvA(4)-RuvB(12)-RuvC(2) complex forms which resolves the HJ.

Its subcellular location is the cytoplasm. Its function is as follows. The RuvA-RuvB-RuvC complex processes Holliday junction (HJ) DNA during genetic recombination and DNA repair, while the RuvA-RuvB complex plays an important role in the rescue of blocked DNA replication forks via replication fork reversal (RFR). RuvA specifically binds to HJ cruciform DNA, conferring on it an open structure. The RuvB hexamer acts as an ATP-dependent pump, pulling dsDNA into and through the RuvAB complex. HJ branch migration allows RuvC to scan DNA until it finds its consensus sequence, where it cleaves and resolves the cruciform DNA. This is Holliday junction branch migration complex subunit RuvA from Acinetobacter baylyi (strain ATCC 33305 / BD413 / ADP1).